The following is a 144-amino-acid chain: Large ribosomal subunit protein uL11 (144 aa).

Belongs to the universal ribosomal protein uL11 family. As to quaternary structure, part of the ribosomal stalk of the 50S ribosomal subunit. Interacts with L10 and the large rRNA to form the base of the stalk. L10 forms an elongated spine to which L12 dimers bind in a sequential fashion forming a multimeric L10(L12)X complex. One or more lysine residues are methylated.

Forms part of the ribosomal stalk which helps the ribosome interact with GTP-bound translation factors. The polypeptide is Large ribosomal subunit protein uL11 (Nocardia farcinica (strain IFM 10152)).